The sequence spans 283 residues: Elongation factor Ts (283 aa).

Residues 80–83 (TDFV) are involved in Mg(2+) ion dislocation from EF-Tu.

Belongs to the EF-Ts family.

Its subcellular location is the cytoplasm. Associates with the EF-Tu.GDP complex and induces the exchange of GDP to GTP. It remains bound to the aminoacyl-tRNA.EF-Tu.GTP complex up to the GTP hydrolysis stage on the ribosome. This chain is Elongation factor Ts, found in Pectobacterium carotovorum subsp. carotovorum (strain PC1).